The following is a 255-amino-acid chain: 5-oxoprolinase subunit A (255 aa).

It belongs to the LamB/PxpA family. In terms of assembly, forms a complex composed of PxpA, PxpB and PxpC.

The catalysed reaction is 5-oxo-L-proline + ATP + 2 H2O = L-glutamate + ADP + phosphate + H(+). In terms of biological role, catalyzes the cleavage of 5-oxoproline to form L-glutamate coupled to the hydrolysis of ATP to ADP and inorganic phosphate. This Campylobacter jejuni subsp. jejuni serotype O:6 (strain 81116 / NCTC 11828) protein is 5-oxoprolinase subunit A.